Reading from the N-terminus, the 177-residue chain is Bifunctional protein PyrR (177 aa).

The PRPP-binding signature appears at valine 99 to threonine 111.

The protein belongs to the purine/pyrimidine phosphoribosyltransferase family. PyrR subfamily.

The enzyme catalyses UMP + diphosphate = 5-phospho-alpha-D-ribose 1-diphosphate + uracil. Its function is as follows. Regulates the transcription of the pyrimidine nucleotide (pyr) operon in response to exogenous pyrimidines. Also displays a weak uracil phosphoribosyltransferase activity which is not physiologically significant. This chain is Bifunctional protein PyrR, found in Gloeothece citriformis (strain PCC 7424) (Cyanothece sp. (strain PCC 7424)).